The sequence spans 332 residues: Anthranilate phosphoribosyltransferase (332 aa).

5-phospho-alpha-D-ribose 1-diphosphate-binding positions include Gly-79, Gly-82–Asp-83, Thr-87, Asn-89–Thr-92, Lys-107–Ser-115, and Ser-119. Gly-79 contacts anthranilate. A Mg(2+)-binding site is contributed by Ser-91. Residue Asn-110 coordinates anthranilate. Arg-165 serves as a coordination point for anthranilate. 2 residues coordinate Mg(2+): Asp-223 and Glu-224.

Belongs to the anthranilate phosphoribosyltransferase family. In terms of assembly, homodimer. Requires Mg(2+) as cofactor.

The enzyme catalyses N-(5-phospho-beta-D-ribosyl)anthranilate + diphosphate = 5-phospho-alpha-D-ribose 1-diphosphate + anthranilate. Its pathway is amino-acid biosynthesis; L-tryptophan biosynthesis; L-tryptophan from chorismate: step 2/5. Its function is as follows. Catalyzes the transfer of the phosphoribosyl group of 5-phosphorylribose-1-pyrophosphate (PRPP) to anthranilate to yield N-(5'-phosphoribosyl)-anthranilate (PRA). The polypeptide is Anthranilate phosphoribosyltransferase (Vibrio parahaemolyticus serotype O3:K6 (strain RIMD 2210633)).